A 211-amino-acid polypeptide reads, in one-letter code: Protein-L-isoaspartate O-methyltransferase (211 aa).

S60 is a catalytic residue.

The protein belongs to the methyltransferase superfamily. L-isoaspartyl/D-aspartyl protein methyltransferase family.

The protein localises to the cytoplasm. The catalysed reaction is [protein]-L-isoaspartate + S-adenosyl-L-methionine = [protein]-L-isoaspartate alpha-methyl ester + S-adenosyl-L-homocysteine. Its function is as follows. Catalyzes the methyl esterification of L-isoaspartyl residues in peptides and proteins that result from spontaneous decomposition of normal L-aspartyl and L-asparaginyl residues. It plays a role in the repair and/or degradation of damaged proteins. This chain is Protein-L-isoaspartate O-methyltransferase, found in Pseudomonas syringae pv. syringae (strain B728a).